The primary structure comprises 197 residues: Putative ankyrin repeat protein R875 (197 aa).

4 ANK repeats span residues 78–106 (LNKC…DIRE), 107–136 (NDDC…DIRA), 138–166 (DDDA…NFRK), and 168–196 (NDYE…VLHE).

The polypeptide is Putative ankyrin repeat protein R875 (Acanthamoeba polyphaga mimivirus (APMV)).